A 309-amino-acid chain; its full sequence is Type II methyltransferase M.HgiDI (309 aa).

The 297-residue stretch at 1 to 297 folds into the SAM-dependent MTase C5-type domain; sequence MKTIDLFAGC…TSLQAYLNQP (297 aa). Residue Cys75 is part of the active site.

Belongs to the class I-like SAM-binding methyltransferase superfamily. C5-methyltransferase family.

The enzyme catalyses a 2'-deoxycytidine in DNA + S-adenosyl-L-methionine = a 5-methyl-2'-deoxycytidine in DNA + S-adenosyl-L-homocysteine + H(+). A methylase that recognizes the double-stranded sequence 5'-GRCGYC-3', methylates C-? on both strands, and protects the DNA from cleavage by the HgiDI endonuclease. The chain is Type II methyltransferase M.HgiDI from Herpetosiphon aurantiacus (Herpetosiphon giganteus).